Consider the following 346-residue polypeptide: Methylthioribose-1-phosphate isomerase (346 aa).

Substrate contacts are provided by residues 48–50, Arg-91, and Gln-196; that span reads RGA. Residue Asp-237 is the Proton donor of the active site. Substrate is bound at residue 247–248; that stretch reads NK.

This sequence belongs to the eIF-2B alpha/beta/delta subunits family. MtnA subfamily.

It carries out the reaction 5-(methylsulfanyl)-alpha-D-ribose 1-phosphate = 5-(methylsulfanyl)-D-ribulose 1-phosphate. Its pathway is amino-acid biosynthesis; L-methionine biosynthesis via salvage pathway; L-methionine from S-methyl-5-thio-alpha-D-ribose 1-phosphate: step 1/6. Functionally, catalyzes the interconversion of methylthioribose-1-phosphate (MTR-1-P) into methylthioribulose-1-phosphate (MTRu-1-P). In Thermosipho melanesiensis (strain DSM 12029 / CIP 104789 / BI429), this protein is Methylthioribose-1-phosphate isomerase.